We begin with the raw amino-acid sequence, 347 residues long: Aurora kinase A- and ninein-interacting protein (347 aa).

The interaction with AURKA stretch occupies residues 182-347; it reads QREAKRKREG…DSEGNRVIRH (166 aa). The tract at residues 273-347 is interaction with RBBP8/CtIP; the sequence is RDSWSQLFTE…DSEGNRVIRH (75 aa). Residue Ser284 is modified to Phosphoserine. Over residues 301–322 the composition is skewed to polar residues; it reads VTNARNQGSGQFPDSPQAQGQD. Positions 301 to 325 are disordered; that stretch reads VTNARNQGSGQFPDSPQAQGQDGPT.

Belongs to the AUNIP family. Interacts (via C-terminus) with AURKA (via C-terminus). Interacts (via N-terminus) with NIN; this interaction blocks NIN phosphorylation by both AURKA and GSK3B. Identified in a complex with NIN and AURKA. Interacts with RBBP8/CtIP.

It is found in the nucleus. It localises to the chromosome. The protein resides in the cytoplasm. The protein localises to the cytoskeleton. Its subcellular location is the microtubule organizing center. It is found in the centrosome. It localises to the spindle pole. In terms of biological role, DNA-binding protein that accumulates at DNA double-strand breaks (DSBs) following DNA damage and promotes DNA resection and homologous recombination. Serves as a sensor of DNA damage: binds DNA with a strong preference for DNA substrates that mimic structures generated at stalled replication forks, and anchors RBBP8/CtIP to DSB sites to promote DNA end resection and ensuing homologous recombination repair. Inhibits non-homologous end joining (NHEJ). Required for the dynamic movement of AURKA at the centrosomes and spindle apparatus during the cell cycle. The chain is Aurora kinase A- and ninein-interacting protein from Rattus norvegicus (Rat).